The primary structure comprises 336 residues: Heme A synthase (336 aa).

The next 8 membrane-spanning stretches (helical) occupy residues 5-25 (LTRW…VGGI), 92-112 (GRAT…KGII), 117-137 (ILSY…GWYM), 153-173 (LAFH…KLVK), 191-211 (LIFS…GALV), 253-273 (FIHR…IISL), 284-304 (VAFY…ITLL), and 307-327 (VPII…SVVI). Heme is bound at residue histidine 255. Histidine 315 is a heme binding site.

This sequence belongs to the COX15/CtaA family. Type 2 subfamily. As to quaternary structure, interacts with CtaB. Heme b serves as cofactor.

Its subcellular location is the cell membrane. It catalyses the reaction Fe(II)-heme o + 2 A + H2O = Fe(II)-heme a + 2 AH2. The protein operates within porphyrin-containing compound metabolism; heme A biosynthesis; heme A from heme O: step 1/1. In terms of biological role, catalyzes the conversion of heme O to heme A by two successive hydroxylations of the methyl group at C8. The first hydroxylation forms heme I, the second hydroxylation results in an unstable dihydroxymethyl group, which spontaneously dehydrates, resulting in the formyl group of heme A. This is Heme A synthase from Rickettsia bellii (strain RML369-C).